We begin with the raw amino-acid sequence, 1164 residues long: Receptor-like protein kinase BRI1-like 3 (1164 aa).

The first 23 residues, 1-23 (MKQQWQFLILCLLVLFLTVDSRG), serve as a signal peptide directing secretion. The Extracellular segment spans residues 24 to 772 (RRLLSDDVND…RSHAHPKKQS (749 aa)). Residue Asn32 is glycosylated (N-linked (GlcNAc...) asparagine). The Cys pair 1 motif lies at 65 to 72 (CTWRGVSC). LRR repeat units lie at residues 77–98 (RVIG…NNLT), 102–123 (NLRS…SSSG), 125–146 (SLEV…DYVF), 151–173 (NLVS…PSAS), 176–197 (RITT…TFIA), 202–224 (SLKH…SFGL), 227–248 (NLTV…VSLS), 252–274 (LLET…DYWG), 278–300 (NLRQ…LSLL), 303–325 (TLEV…FTSC), 327–347 (SLQS…STVV), 352–375 (RITN…TNCS), 376–397 (NLRV…GFCS), 403–424 (VLEK…ELGK), 427–448 (SLKT…EIWT), 451–473 (KLSD…ICVD), 476–498 (NLET…ISKC), 500–523 (NMLW…GKLE), 524–546 (KLAI…LGNC), and 548–570 (NLIW…LASQ). Residues Asn96 and Asn112 are each glycosylated (N-linked (GlcNAc...) asparagine). Asn156 is a glycosylation site (N-linked (GlcNAc...) asparagine). N-linked (GlcNAc...) asparagine glycosylation is found at Asn212, Asn227, and Asn257. N-linked (GlcNAc...) asparagine glycans are attached at residues Asn362 and Asn373. N-linked (GlcNAc...) asparagine glycosylation is present at Asn461. 3 N-linked (GlcNAc...) asparagine glycosylation sites follow: Asn532, Asn558, and Asn638. LRR repeat units follow at residues 640–662 (SMIY…YGAM), 664–686 (YLQV…FGGL), 688–711 (AIGV…GGLS), and 712–734 (FLSD…GQLT). Residues Asn722 and Asn743 are each glycosylated (N-linked (GlcNAc...) asparagine). A Cys pair 2 motif is present at residues 748–755 (CGVPLPPC). The helical transmembrane segment at 773 to 793 (IATGMSAGIVFSFMCIVMLIM) threads the bilayer. At 794-1164 (ALYRARKVQK…LVEESRDKEP (371 aa)) the chain is on the cytoplasmic side. Residues Thr847 and Thr855 each carry the phosphothreonine modification. One can recognise a Protein kinase domain in the interval 858–1136 (FSADSMIGSG…QVMTMFKELV (279 aa)). Residues 864–872 (IGSGGFGDV) and Lys886 contribute to the ATP site. Residue Tyr931 is modified to Phosphotyrosine. The active-site Proton acceptor is Asp985. At Ser1020 the chain carries Phosphoserine. Phosphotyrosine is present on Tyr1028.

It belongs to the protein kinase superfamily. Ser/Thr protein kinase family. Post-translationally, autophosphorylated on Tyr and Thr residues. In terms of tissue distribution, predominantly expressed in vascular tissues. Expressed only during postembryonic development with a very discrete pattern of expression, preferentially in the two protophloem cell files at the elongation zone of the root. The expression in these two cell files attenuates as the phloem cells differentiate in the upper root. In cotyledons and leaves, it is expressed in phloem cells, starting at the cotyledons and shoot apex, moving toward the basal part of the leaves, where the expression is weak. Expressed in the secondary and tertiary veins and in the upper part of the cotyledons and leaves. Weakly or not expressed in the inflorescence stems. Has some complementary expression with BRL1.

It localises to the cell membrane. The enzyme catalyses L-seryl-[protein] + ATP = O-phospho-L-seryl-[protein] + ADP + H(+). The catalysed reaction is L-threonyl-[protein] + ATP = O-phospho-L-threonyl-[protein] + ADP + H(+). It catalyses the reaction L-tyrosyl-[protein] + ATP = O-phospho-L-tyrosyl-[protein] + ADP + H(+). In terms of biological role, receptor with a dual specificity kinase activity acting on both serine/threonine- and tyrosine-containing substrates. Binds brassinolide. Regulates, in response to brassinosteroid binding, a signaling cascade involved in plant development. May be involved in cell growth and vascular differentiation. This chain is Receptor-like protein kinase BRI1-like 3 (BRL3), found in Arabidopsis thaliana (Mouse-ear cress).